Consider the following 385-residue polypeptide: Probable peptidoglycan glycosyltransferase FtsW (385 aa).

9 helical membrane-spanning segments follow: residues 18–38 (LLWT…SASL), 57–77 (IYLA…PLAL), 81–101 (LRFV…IPGL), 111–131 (WIAL…CFVL), 157–177 (LLGV…VVVL), 195–215 (FLLI…AEPY), 280–300 (LGLL…WRVF), 311–331 (LLYH…QAFI), and 347–367 (LPFI…VGLI).

It belongs to the SEDS family. FtsW subfamily.

The protein resides in the cell inner membrane. It catalyses the reaction [GlcNAc-(1-&gt;4)-Mur2Ac(oyl-L-Ala-gamma-D-Glu-L-Lys-D-Ala-D-Ala)](n)-di-trans,octa-cis-undecaprenyl diphosphate + beta-D-GlcNAc-(1-&gt;4)-Mur2Ac(oyl-L-Ala-gamma-D-Glu-L-Lys-D-Ala-D-Ala)-di-trans,octa-cis-undecaprenyl diphosphate = [GlcNAc-(1-&gt;4)-Mur2Ac(oyl-L-Ala-gamma-D-Glu-L-Lys-D-Ala-D-Ala)](n+1)-di-trans,octa-cis-undecaprenyl diphosphate + di-trans,octa-cis-undecaprenyl diphosphate + H(+). Its pathway is cell wall biogenesis; peptidoglycan biosynthesis. Functionally, peptidoglycan polymerase that is essential for cell division. This is Probable peptidoglycan glycosyltransferase FtsW from Alcanivorax borkumensis (strain ATCC 700651 / DSM 11573 / NCIMB 13689 / SK2).